Reading from the N-terminus, the 480-residue chain is NADH-quinone oxidoreductase subunit N (480 aa).

Transmembrane regions (helical) follow at residues 13–33 (ISPM…QFLI), 41–61 (PLWV…YHTT), 81–101 (VWLS…APPF), 107–127 (TLFP…MFLT), 132–152 (LIVI…MIGM), 167–187 (FLLG…LYGG), 212–232 (LGLG…PFHS), 245–265 (ITGF…IILF), 276–296 (VWKY…NIVA), 314–334 (AGYI…YYLF), 373–393 (ALAL…IGFW), 413–433 (LLFG…KITI), and 454–474 (PTLG…WIFF).

It belongs to the complex I subunit 2 family. As to quaternary structure, NDH-1 is composed of 14 different subunits. Subunits NuoA, H, J, K, L, M, N constitute the membrane sector of the complex.

The protein localises to the cell inner membrane. It carries out the reaction a quinone + NADH + 5 H(+)(in) = a quinol + NAD(+) + 4 H(+)(out). In terms of biological role, NDH-1 shuttles electrons from NADH, via FMN and iron-sulfur (Fe-S) centers, to quinones in the respiratory chain. The immediate electron acceptor for the enzyme in this species is believed to be ubiquinone. Couples the redox reaction to proton translocation (for every two electrons transferred, four hydrogen ions are translocated across the cytoplasmic membrane), and thus conserves the redox energy in a proton gradient. The sequence is that of NADH-quinone oxidoreductase subunit N from Leptospira biflexa serovar Patoc (strain Patoc 1 / Ames).